Here is a 481-residue protein sequence, read N- to C-terminus: Proline--tRNA ligase (481 aa).

It belongs to the class-II aminoacyl-tRNA synthetase family. ProS type 3 subfamily. Homodimer.

The protein localises to the cytoplasm. It carries out the reaction tRNA(Pro) + L-proline + ATP = L-prolyl-tRNA(Pro) + AMP + diphosphate. Functionally, catalyzes the attachment of proline to tRNA(Pro) in a two-step reaction: proline is first activated by ATP to form Pro-AMP and then transferred to the acceptor end of tRNA(Pro). This Chlorobium chlorochromatii (strain CaD3) protein is Proline--tRNA ligase.